Here is a 445-residue protein sequence, read N- to C-terminus: Methionine aminopeptidase 2 (445 aa).

Residues 1-80 (MAAQVASGVG…TSKVQTEPPR (80 aa)) form a disordered region. Basic residues predominate over residues 57–71 (AKKKKKKTKKKKKGT). H195 contributes to the substrate binding site. A divalent metal cation is bound by residues D215, D226, and H295. H303 is a substrate binding site. E331 and E426 together coordinate a divalent metal cation.

Belongs to the peptidase M24A family. Methionine aminopeptidase eukaryotic type 2 subfamily. The cofactor is Co(2+). Requires Zn(2+) as cofactor. Mn(2+) serves as cofactor. Fe(2+) is required as a cofactor.

It is found in the cytoplasm. The catalysed reaction is Release of N-terminal amino acids, preferentially methionine, from peptides and arylamides.. Functionally, cotranslationally removes the N-terminal methionine from nascent proteins. The N-terminal methionine is often cleaved when the second residue in the primary sequence is small and uncharged (Met-Ala-, Cys, Gly, Pro, Ser, Thr, or Val). The protein is Methionine aminopeptidase 2 of Paracoccidioides brasiliensis (strain Pb18).